We begin with the raw amino-acid sequence, 860 residues long: MQEQYRPEEIESKVQLHWDEKRTFEVTEDESKEKYYCLSMLPYPSGRLHMGHVRNYTIGDVIARYQRMLGKNVLQPIGWDAFGLPAEGAAVKNNTAPAPWTYDNIAYMKNQLKMLGFGYDWSRELATCTPEYYRWEQKFFTELYKKGLVYKKTSAVNWCPNDQTVLANEQVIDGCCWRCDTKVERKEIPQWFIKITAYADELLNDLDKLDHWPDTVKTMQRNWIGRSEGVEITFNVNDYDNTLTVYTTRPDTFMGCTYLAVAAGHPLAQKAAENNPELAAFIDECRNTKVAEAEMATMEKKGVNTGFKAVHPLTGEEIPVWAANFVLMEYGTGAVMAVPGHDQRDYEFASKYGLNIKPVILAADGSEPDLSQQALTEKGVLFNSGEFNGLDHEAAFNAIADKLTAMGVGERKVNYRLRDWGVSRQRYWGAPIPMVTLEDGTVMPTPDDQLPVILPEDVVMDGITSPIKADPQWAKTTVNGMPALRETDTFDTFMESSWYYARYTCPEYKEGMLDSEAANYWLPVDIYIGGIEHAIMHLLYFRFFHKLMRDAGMVNSDEPAKQLLCQGMVLADAFYYVGENGERNWVSPVDAIVERDEKGRIVKAKDAAGHELVYTGMSKMSKSKNNGIDPQVMVERYGADTVRLFMMFASPADMTLEWQESGVEGANRFLKRVWKLVYEHTAKGDVAALNVDALTEDQKALRRDVHKTIAKVTDDIGRRQTFNTAIAAIMELMNKLAKAPTDGEQDRALMQEALLAVVRMLNPFTPHICFTLWQELKGEGDIDNAPWPVADEKAMVEDSTLVVVQVNGKVRAKITVPVDATEEQVRERAGQEHLVAKYLDGVTVRKVIYVPGKLLNLVVG.

A 'HIGH' region motif is present at residues 42–52; sequence PYPSGRLHMGH. Positions 619–623 match the 'KMSKS' region motif; it reads KMSKS. Lys622 serves as a coordination point for ATP.

The protein belongs to the class-I aminoacyl-tRNA synthetase family.

The protein localises to the cytoplasm. It carries out the reaction tRNA(Leu) + L-leucine + ATP = L-leucyl-tRNA(Leu) + AMP + diphosphate. The sequence is that of Leucine--tRNA ligase from Escherichia coli O157:H7.